A 229-amino-acid polypeptide reads, in one-letter code: MLSGGAGSIPELNAQISVCRACPRLVDWREEVAVVKRRAFADQPYWGRPVPGWGSEQPRLLIVGLAPAAHGANRTGRMFTGDRSGDQLYAALHRAGLVNLPISMDAADGLQANQIRITAPVRCAPPGNAPTQAEWVTCSPWLEAEWRLVSEYVRAIVALGGFAWQIVLRLPGVSAMRKPRFSHGVVAQLYAGVRLLGCYHPSQQNMFTGRLTPAMLDDIFRDAKKLAGI.

[4Fe-4S] cluster-binding residues include C19, C22, C123, and C138.

It belongs to the uracil-DNA glycosylase (UDG) superfamily. Type 5 (UDGb) family.

DNA glycosylase with broad substrate specificity. The chain is Type-5 uracil-DNA glycosylase from Mycobacterium leprae (strain TN).